Reading from the N-terminus, the 404-residue chain is Cysteine desulfurase IscS (404 aa).

Residues 75–76 (AT), asparagine 155, glutamine 183, and 203–205 (SGH) contribute to the pyridoxal 5'-phosphate site. The residue at position 206 (lysine 206) is an N6-(pyridoxal phosphate)lysine. Threonine 243 serves as a coordination point for pyridoxal 5'-phosphate. The Cysteine persulfide intermediate role is filled by cysteine 328. A [2Fe-2S] cluster-binding site is contributed by cysteine 328.

This sequence belongs to the class-V pyridoxal-phosphate-dependent aminotransferase family. NifS/IscS subfamily. As to quaternary structure, homodimer. Forms a heterotetramer with IscU, interacts with other sulfur acceptors. Requires pyridoxal 5'-phosphate as cofactor.

Its subcellular location is the cytoplasm. The catalysed reaction is (sulfur carrier)-H + L-cysteine = (sulfur carrier)-SH + L-alanine. It participates in cofactor biosynthesis; iron-sulfur cluster biosynthesis. Master enzyme that delivers sulfur to a number of partners involved in Fe-S cluster assembly, tRNA modification or cofactor biosynthesis. Catalyzes the removal of elemental sulfur and selenium atoms from cysteine and selenocysteine to produce alanine. Functions as a sulfur delivery protein for Fe-S cluster synthesis onto IscU, an Fe-S scaffold assembly protein, as well as other S acceptor proteins. Also functions as a selenium delivery protein in the pathway for the biosynthesis of selenophosphate. The protein is Cysteine desulfurase IscS of Salmonella typhi.